The following is a 365-amino-acid chain: Terpene cyclase 4 (365 aa).

The span at Met-1–Ser-11 shows a compositional bias: pro residues. A disordered region spans residues Met-1–Lys-20. Residues Asp-118, Asn-260, and Ser-264 each contribute to the Mg(2+) site. Residues Asp-118–Asp-122 carry the D(D/E)XX(D/E) motif motif. The NSE motif signature appears at Asn-260 to Asp-268. A WxxxxxRY motif motif is present at residues Trp-341–Tyr-348. (2E,6E)-farnesyl diphosphate-binding residues include Arg-347 and Tyr-348.

Belongs to the terpene synthase family. As to quaternary structure, homodimer. Requires Mg(2+) as cofactor.

It catalyses the reaction (2E,6E)-farnesyl diphosphate + H2O = koraiol + diphosphate. It functions in the pathway sesquiterpene biosynthesis. Functionally, terpene cyclase that catalyzes the cyclization of farnesyl diphosphate (FPP) to the sesquiterpene koraiol. The protein is Terpene cyclase 4 of Gibberella fujikuroi (strain CBS 195.34 / IMI 58289 / NRRL A-6831) (Bakanae and foot rot disease fungus).